Reading from the N-terminus, the 231-residue chain is High-affinity zinc uptake system ATP-binding protein ZnuC (231 aa).

Residues Val-4 to Leu-230 form the ABC transporter domain.

This sequence belongs to the ABC transporter superfamily. The complex is composed of two ATP-binding proteins (ZnuC), two transmembrane proteins (ZnuB) and a solute-binding protein (ZnuA).

It is found in the cell membrane. It catalyses the reaction Zn(2+)(out) + ATP(in) + H2O(in) = Zn(2+)(in) + ADP(in) + phosphate(in) + H(+)(in). In terms of biological role, part of the high-affinity ABC transporter complex ZnuABC involved in zinc import. Responsible for energy coupling to the transport system. ZnuABC-mediated zinc transport is required for comF expression and competence development. The protein is High-affinity zinc uptake system ATP-binding protein ZnuC (znuC) of Bacillus subtilis (strain 168).